The sequence spans 526 residues: Biotin carboxylase 2, chloroplastic (526 aa).

The N-terminal 71 residues, 1-71 (MEATLPVCKS…GVTCRAEKIL (71 aa)), are a transit peptide targeting the chloroplast. ATP is bound by residues Lys181, 213–274 (ASEI…PRHI), Lys223, 229–230 (GG), 265–268 (EKYV), and His273. Residues 185 to 382 (RETMKKANVP…LIEEQIRVAM (198 aa)) enclose the ATP-grasp domain. Residue Lys302 participates in hydrogencarbonate binding. The ATP site is built by Glu340 and Glu353. 3 residues coordinate Mg(2+): Glu340, Glu353, and Asn355. Mn(2+)-binding residues include Glu340, Glu353, and Asn355. Arg357, Val360, and Arg403 together coordinate hydrogencarbonate. The active site involves Arg357. Biotin is bound at residue Arg403.

In terms of assembly, acetyl-CoA carboxylase is a heterohexamer composed of biotin carboxyl carrier protein, biotin carboxylase and two subunits each of ACCase subunit alpha and ACCase plastid-coded subunit beta (accD). The cofactor is Mg(2+). Mn(2+) serves as cofactor.

It localises to the plastid. The protein localises to the chloroplast. It carries out the reaction N(6)-biotinyl-L-lysyl-[protein] + hydrogencarbonate + ATP = N(6)-carboxybiotinyl-L-lysyl-[protein] + ADP + phosphate + H(+). It functions in the pathway lipid metabolism; malonyl-CoA biosynthesis; malonyl-CoA from acetyl-CoA: step 1/1. Functionally, this protein is a component of the acetyl coenzyme A carboxylase complex; first, biotin carboxylase catalyzes the carboxylation of the carrier protein and then the transcarboxylase transfers the carboxyl group to form malonyl-CoA. This chain is Biotin carboxylase 2, chloroplastic, found in Populus trichocarpa (Western balsam poplar).